The chain runs to 382 residues: Protein PEP-RELATED DEVELOPMENT ARRESTED 1 homolog, chloroplastic (382 aa).

Residues 1–44 (MAILPLSISHSLTSALSATSSGIGRPVARLLHPRVPSRPTVICL) constitute a chloroplast transit peptide.

It localises to the plastid. It is found in the chloroplast stroma. The protein localises to the chloroplast nucleoid. Functionally, plays an essential role in early steps of chloroplast development. May be involved in the redox control of plastid gene expression by maintening the redox state around chloroplast nucleoids. May positively regulate plastid-encoded RNA polymerase (PEP) activity. This chain is Protein PEP-RELATED DEVELOPMENT ARRESTED 1 homolog, chloroplastic, found in Oryza sativa subsp. japonica (Rice).